A 1409-amino-acid polypeptide reads, in one-letter code: DNA-directed RNA polymerase subunit beta' (1409 aa).

Positions 70, 72, 85, and 88 each coordinate Zn(2+). Asp-458, Asp-460, and Asp-462 together coordinate Mg(2+). The Zn(2+) site is built by Cys-813, Cys-887, Cys-894, and Cys-897. Over residues 1385–1403 (EAAELAGSTSDVSTTADAS) the composition is skewed to low complexity. The interval 1385 to 1409 (EAAELAGSTSDVSTTADASEGAASE) is disordered.

It belongs to the RNA polymerase beta' chain family. As to quaternary structure, the RNAP catalytic core consists of 2 alpha, 1 beta, 1 beta' and 1 omega subunit. When a sigma factor is associated with the core the holoenzyme is formed, which can initiate transcription. Mg(2+) is required as a cofactor. Zn(2+) serves as cofactor.

The enzyme catalyses RNA(n) + a ribonucleoside 5'-triphosphate = RNA(n+1) + diphosphate. In terms of biological role, DNA-dependent RNA polymerase catalyzes the transcription of DNA into RNA using the four ribonucleoside triphosphates as substrates. The polypeptide is DNA-directed RNA polymerase subunit beta' (Variovorax paradoxus (strain S110)).